Consider the following 558-residue polypeptide: Cytochrome c oxidase subunit 1-beta (558 aa).

Over 1–28 (MADAAVHGHGDHHDTRGFFTRWFMSTNH) the chain is Cytoplasmic. The chain crosses the membrane as a helical span at residues 29–59 (KDIGILYLFTAGIVGLISVCFTVYMRMELQH). At 60 to 82 (PGVQYMCLEGARLIADASAECTP) the chain is on the periplasmic side. Cysteine 66 and cysteine 80 are oxidised to a cystine. Residues 83–120 (NGHLWNVMITYHGVLMMFFVVIPALFGGFGNYFMPLHI) form a helical membrane-spanning segment. Histidine 94 is a Fe(II)-heme a binding site. The Cytoplasmic segment spans residues 121–126 (GAPDMA). Residues 127-151 (FPRLNNLSYWMYVCGVALGVASLLA) traverse the membrane as a helical segment. The Periplasmic portion of the chain corresponds to 152–176 (PGGNDQMGSGVGWVLYPPLSTTEAG). The helical transmembrane segment at 177-206 (YSMDLAIFAVHVSGASSILGAINIITTFLN) threads the bilayer. The Cytoplasmic segment spans residues 207 to 217 (MRAPGMTLFKV). A helical transmembrane segment spans residues 218–251 (PLFAWSVFITAWLILLSLPVLAGAITMLLMDRNF). Residues 252-262 (GTQFFDPAGGG) are Periplasmic-facing. The chain crosses the membrane as a helical span at residues 263–299 (DPVLYQHILWFFGHPEVYIIILPGFGIISHVISTFAK). 2 residues coordinate Cu cation: histidine 276 and tyrosine 280. Residues 276-280 (HPEVY) constitute a cross-link (1'-histidyl-3'-tyrosine (His-Tyr)). Residues 300–303 (KPIF) are Cytoplasmic-facing. The chain crosses the membrane as a helical span at residues 304–331 (GYLPMVLAMAAIGILGFVVWAHHMYTAG). Positions 325 and 326 each coordinate Cu cation. A topological domain (periplasmic) is located at residue methionine 332. The chain crosses the membrane as a helical span at residues 333 to 364 (SLTQQAYFMLATMTIAVPTGIKVFSWIATMWG). At 365 to 369 (GSIEF) the chain is on the cytoplasmic side. Residues 370–395 (KTPMLWAFGFLFLFTVGGVTGVVLSQ) form a helical membrane-spanning segment. Topologically, residues 396–404 (APLDRVYHD) are periplasmic. Residues 405 to 437 (TYYVVAHFHYVMSLGAVFGIFAGVYYWIGKMSG) traverse the membrane as a helical segment. Histidine 411 serves as a coordination point for heme a3. Position 413 (histidine 413) interacts with Fe(II)-heme a. Over 438 to 440 (RQY) the chain is Cytoplasmic. A helical membrane pass occupies residues 441-469 (PEWAGQLHFWMMFIGSNLIFFPQHFLGRQ). At 470–478 (GMPRRYIDY) the chain is on the periplasmic side. Residues 479-514 (PVEFAYWNNISSIGAYISFASFLFFIGIVFYTLFAG) traverse the membrane as a helical segment. Over 515 to 558 (KRVNVPNYWNEHADTLEWTLPSPPPEHTFETLPKREDWDRAHAH) the chain is Cytoplasmic.

Belongs to the heme-copper respiratory oxidase family. Cu(2+) serves as cofactor. It depends on heme as a cofactor. Post-translationally, his-276 and Tyr-280 are involved in the formation of a copper-coordinated covalent cross-link at the active site of the catalytic subunit I.

The protein resides in the cell inner membrane. It carries out the reaction 4 Fe(II)-[cytochrome c] + O2 + 8 H(+)(in) = 4 Fe(III)-[cytochrome c] + 2 H2O + 4 H(+)(out). It functions in the pathway energy metabolism; oxidative phosphorylation. In terms of biological role, subunit I and II form the functional core of the enzyme complex. Electrons originating in cytochrome c are transferred via heme a and Cu(A) to the binuclear center formed by heme a3 and Cu(B). This cytochrome c oxidase shows proton pump activity across the membrane in addition to the electron transfer. The protein is Cytochrome c oxidase subunit 1-beta (ctaDII) of Paracoccus denitrificans.